A 593-amino-acid polypeptide reads, in one-letter code: NADH-quinone oxidoreductase subunit C/D (593 aa).

The NADH dehydrogenase I subunit C stretch occupies residues 1–184; sequence MTADSALYIP…DPYSLSAAKQ (184 aa). The tract at residues 208–593 is NADH dehydrogenase I subunit D; it reads DYMFLNLGPN…IDFVMADVDR (386 aa).

It in the N-terminal section; belongs to the complex I 30 kDa subunit family. This sequence in the C-terminal section; belongs to the complex I 49 kDa subunit family. In terms of assembly, NDH-1 is composed of 13 different subunits. Subunits NuoB, CD, E, F, and G constitute the peripheral sector of the complex.

It is found in the cell inner membrane. It carries out the reaction a quinone + NADH + 5 H(+)(in) = a quinol + NAD(+) + 4 H(+)(out). Functionally, NDH-1 shuttles electrons from NADH, via FMN and iron-sulfur (Fe-S) centers, to quinones in the respiratory chain. The immediate electron acceptor for the enzyme in this species is believed to be ubiquinone. Couples the redox reaction to proton translocation (for every two electrons transferred, four hydrogen ions are translocated across the cytoplasmic membrane), and thus conserves the redox energy in a proton gradient. This Pseudomonas aeruginosa (strain UCBPP-PA14) protein is NADH-quinone oxidoreductase subunit C/D.